The sequence spans 350 residues: Glyceraldehyde-3-phosphate dehydrogenase (350 aa).

Residues 10 to 11, Asp-36, Arg-82, and Ser-125 contribute to the NAD(+) site; that span reads RI. D-glyceraldehyde 3-phosphate-binding positions include 161–163, Thr-193, 222–223, and Arg-245; these read SCT and TG. The active-site Nucleophile is the Cys-162. Asn-331 serves as a coordination point for NAD(+).

It belongs to the glyceraldehyde-3-phosphate dehydrogenase family. Homotetramer.

It localises to the cytoplasm. The enzyme catalyses D-glyceraldehyde 3-phosphate + phosphate + NAD(+) = (2R)-3-phospho-glyceroyl phosphate + NADH + H(+). It participates in carbohydrate degradation; glycolysis; pyruvate from D-glyceraldehyde 3-phosphate: step 1/5. Its function is as follows. Catalyzes the oxidative phosphorylation of glyceraldehyde 3-phosphate (G3P) to 1,3-bisphosphoglycerate (BPG) using the cofactor NAD. The first reaction step involves the formation of a hemiacetal intermediate between G3P and a cysteine residue, and this hemiacetal intermediate is then oxidized to a thioester, with concomitant reduction of NAD to NADH. The reduced NADH is then exchanged with the second NAD, and the thioester is attacked by a nucleophilic inorganic phosphate to produce BPG. This Treponema pallidum (strain Nichols) protein is Glyceraldehyde-3-phosphate dehydrogenase (gap).